Consider the following 288-residue polypeptide: MASAKEIRNKIGSVQNTQKITKAMEMVAASKMRKTQDAMESSRPYAETMRKVIGHIALGNLEYKHPYLEVREAKRVGYIIVSSDRGLCGGLNINLFKSAMTDIKGWADQGADVEMALVGAKATAFFNSYGGNVVAQVSGLGDSPTVNELIGTVGVMLKKYNEGLLDRLYLVYNQFVNTMIQEPVIDQLLPLPKSKDEEMQRNHSWDYIYEPEPKPLLDTLLVRYVESQVYQGVVENLACEQAARMVAMKSATDNAGDIINDLQLVYNKARQAAITQELSEIVSGASAV.

Belongs to the ATPase gamma chain family. F-type ATPases have 2 components, CF(1) - the catalytic core - and CF(0) - the membrane proton channel. CF(1) has five subunits: alpha(3), beta(3), gamma(1), delta(1), epsilon(1). CF(0) has three main subunits: a, b and c.

The protein resides in the cell inner membrane. Produces ATP from ADP in the presence of a proton gradient across the membrane. The gamma chain is believed to be important in regulating ATPase activity and the flow of protons through the CF(0) complex. This Photobacterium profundum (strain SS9) protein is ATP synthase gamma chain 1.